Reading from the N-terminus, the 209-residue chain is MERTLWDITPALSPTTPTWPGDTPFSQEIAWKLEGDCPVNVGRITLSPHTGAHADAPLHYRADGAAIGQVPLDAYLGLCRVIHCVGVARVEPEHVRDALTNAPPRVLLRTYAHMPQTAWDNDFAAVAPETIALLATHGVKLIGVDTASLDPQTSKTMDAHHAVGKHGLAILEGLLLDDVPAGDYELIALPLKFATLDASPVRAVLRSLP.

Tryptophan 19 lines the substrate pocket. Zn(2+)-binding residues include histidine 49, histidine 53, and aspartate 55. Histidine 59 acts as the Proton donor/acceptor in catalysis. Residues histidine 160 and glutamate 172 each coordinate Zn(2+).

It belongs to the Cyclase 1 superfamily. KynB family. As to quaternary structure, homodimer. Zn(2+) is required as a cofactor.

It catalyses the reaction N-formyl-L-kynurenine + H2O = L-kynurenine + formate + H(+). It functions in the pathway amino-acid degradation; L-tryptophan degradation via kynurenine pathway; L-kynurenine from L-tryptophan: step 2/2. Catalyzes the hydrolysis of N-formyl-L-kynurenine to L-kynurenine, the second step in the kynurenine pathway of tryptophan degradation. The polypeptide is Kynurenine formamidase (Ralstonia pickettii (strain 12J)).